We begin with the raw amino-acid sequence, 303 residues long: Mesenteric estrogen-dependent adipogenesis protein (303 aa).

It is found in the cytoplasm. In terms of biological role, involved in processes that promote adipocyte differentiation, lipid accumulation, and glucose uptake in mature adipocytes. The polypeptide is Mesenteric estrogen-dependent adipogenesis protein (MEDAG) (Bos taurus (Bovine)).